A 647-amino-acid chain; its full sequence is tRNA uridine 5-carboxymethylaminomethyl modification enzyme MnmG (647 aa).

Residues 22–27 (GAGHAG), Val134, and Ser189 contribute to the FAD site. An NAD(+)-binding site is contributed by 283-297 (GARYCPSIEDKIMRF). Gln380 lines the FAD pocket.

Belongs to the MnmG family. As to quaternary structure, homodimer. Heterotetramer of two MnmE and two MnmG subunits. It depends on FAD as a cofactor.

The protein resides in the cytoplasm. NAD-binding protein involved in the addition of a carboxymethylaminomethyl (cmnm) group at the wobble position (U34) of certain tRNAs, forming tRNA-cmnm(5)s(2)U34. The protein is tRNA uridine 5-carboxymethylaminomethyl modification enzyme MnmG of Desulfotalea psychrophila (strain LSv54 / DSM 12343).